The primary structure comprises 441 residues: 23S rRNA (uracil(1939)-C(5))-methyltransferase RlmD (441 aa).

The TRAM domain maps to 10–68 (KPLKQQSLVLDITAMDHHGRGIAKHNNKVCFVSNALPNEQVKATIIADKARYSEAQTHK). The [4Fe-4S] cluster site is built by Cys81, Cys87, Cys90, and Cys169. S-adenosyl-L-methionine is bound by residues Gln274, Phe303, Asn308, Glu324, Asp351, and Asp372. The active-site Nucleophile is the Cys398.

Belongs to the class I-like SAM-binding methyltransferase superfamily. RNA M5U methyltransferase family. RlmD subfamily.

It carries out the reaction uridine(1939) in 23S rRNA + S-adenosyl-L-methionine = 5-methyluridine(1939) in 23S rRNA + S-adenosyl-L-homocysteine + H(+). In terms of biological role, catalyzes the formation of 5-methyl-uridine at position 1939 (m5U1939) in 23S rRNA. This Pseudoalteromonas translucida (strain TAC 125) protein is 23S rRNA (uracil(1939)-C(5))-methyltransferase RlmD.